The primary structure comprises 743 residues: Merozoite surface protein 9 (743 aa).

Positions 1-23 (MMNMKIVLFSLLLFVIRWNIISC) are cleaved as a signal peptide. Positions 77-235 (KELLKEKQYT…VNDEDDVNDE (159 aa)) are interaction with MSP1 and host SLC4A1/Band 3. Disordered stretches follow at residues 202–282 (KSQG…ATAY), 459–487 (DNQAVDTKSMEEPKVKAQPALRGVEPTED), 512–540 (NNTPNVVPPTQSKKKNKNETVSGMDENFD), and 666–743 (VDAL…EESK). The segment covering 211-224 (SQNQNENNDNQKYQ) has biased composition (polar residues). Tandem repeats lie at residues 226 to 231 (VNDEDD), 232 to 237 (VNDEED), 238 to 243 (TNDDED), 244 to 249 (TNDEED), 250 to 255 (TNDDED), 256 to 261 (TNDDED), 262 to 267 (TNDEED), and 268 to 273 (TNDEED). Residues 226-273 (VNDEDDVNDEEDTNDDEDTNDEEDTNDDEDTNDDEDTNDEEDTNDEED) form an 8 X 6 AA tandem repeats of [VT]-N-D-[ED]-[ED]-D region. The span at 226-274 (VNDEDDVNDEEDTNDDEDTNDEEDTNDDEDTNDDEDTNDEEDTNDEEDH) shows a compositional bias: acidic residues. The interval 364 to 528 (LKDNLINYEF…PPTQSKKKNK (165 aa)) is interaction with MSP1 and host SLC4A1/Band 3. Basic and acidic residues predominate over residues 459–473 (DNQAVDTKSMEEPKV). Residues 512–521 (NNTPNVVPPT) are compositionally biased toward low complexity. Residues 644–733 (NQETEEEMEK…QEEEEEEEIV (90 aa)) adopt a coiled-coil conformation. The span at 672 to 721 (KNKEEEEKEKEKEEKEKEEKEKEKEEKEKEEKEKEEKEKEEKEEEKKEKE) shows a compositional bias: basic and acidic residues. The span at 722-733 (EEQEEEEEEEIV) shows a compositional bias: acidic residues.

The protein belongs to the plasmodium ABRA family. As to quaternary structure, forms a complex composed of MSP1, MSP6, MSP7, MSP9 and MSP3; within the complex, MSP6 and MSP9 mediate the binding to the host erythrocyte. Interacts with MSP1 subunits p19 and p42; the interaction is direct. Interacts with host SLC4A1/Band 3 protein (via the 5ABC region). MSP1 subunits p19 or p42, and MSP9 form a co-ligand complex that interacts with host SLC4A1/Band 3 protein. Not glycosylated.

The protein resides in the cell membrane. It localises to the parasitophorous vacuole lumen. Its subcellular location is the secreted. Functionally, during the asexual blood stage, involved in the sialic acid-independent (SAID) merozoite invasion of host erythrocytes by binding to host SLC4A1/Band 3 protein on the surface of the host erythrocyte. This is Merozoite surface protein 9 from Plasmodium falciparum (isolate 3D7).